The sequence spans 204 residues: Thiamine-phosphate synthase (204 aa).

4-amino-2-methyl-5-(diphosphooxymethyl)pyrimidine contacts are provided by residues Q28–K32 and N60. The Mg(2+) site is built by D61 and D80. Residues S99 and K128 each contribute to the 4-amino-2-methyl-5-(diphosphooxymethyl)pyrimidine site. 2-[(2R,5Z)-2-carboxy-4-methylthiazol-5(2H)-ylidene]ethyl phosphate-binding positions include G157 and V177–T178.

This sequence belongs to the thiamine-phosphate synthase family. Requires Mg(2+) as cofactor.

The enzyme catalyses 2-[(2R,5Z)-2-carboxy-4-methylthiazol-5(2H)-ylidene]ethyl phosphate + 4-amino-2-methyl-5-(diphosphooxymethyl)pyrimidine + 2 H(+) = thiamine phosphate + CO2 + diphosphate. The catalysed reaction is 2-(2-carboxy-4-methylthiazol-5-yl)ethyl phosphate + 4-amino-2-methyl-5-(diphosphooxymethyl)pyrimidine + 2 H(+) = thiamine phosphate + CO2 + diphosphate. It catalyses the reaction 4-methyl-5-(2-phosphooxyethyl)-thiazole + 4-amino-2-methyl-5-(diphosphooxymethyl)pyrimidine + H(+) = thiamine phosphate + diphosphate. Its pathway is cofactor biosynthesis; thiamine diphosphate biosynthesis; thiamine phosphate from 4-amino-2-methyl-5-diphosphomethylpyrimidine and 4-methyl-5-(2-phosphoethyl)-thiazole: step 1/1. Functionally, condenses 4-methyl-5-(beta-hydroxyethyl)thiazole monophosphate (THZ-P) and 2-methyl-4-amino-5-hydroxymethyl pyrimidine pyrophosphate (HMP-PP) to form thiamine monophosphate (TMP). The sequence is that of Thiamine-phosphate synthase from Rhizobium etli (strain ATCC 51251 / DSM 11541 / JCM 21823 / NBRC 15573 / CFN 42).